Consider the following 80-residue polypeptide: Serine palmitoyltransferase small subunit B (80 aa).

At 1 to 11 (MDVKHIKDYLS) the chain is on the cytoplasmic side. The helical transmembrane segment at 12 to 29 (WLYYQYLLITCSYVLEPW) threads the bilayer. At 30–36 (EQSIFNT) the chain is on the lumenal side. A helical transmembrane segment spans residues 37–57 (LLLTIIAMVIYSSYIFIPIHV). Residues 58-80 (RLAVEFFSGIFGGQHESTVALMS) are Cytoplasmic-facing.

Belongs to the SPTSS family. SPTSSB subfamily. Component of the serine palmitoyltransferase (SPT) complex, which is composed of SPTLC1, SPTLC2 or SPTLC3 and SPTSSA or SPTSSB. The heterodimer consisting of SPTLC1 and SPTLC2/SPTLC3 forms the catalytic core of the enzyme, while SPTSSA or SPTSSB subunits determine substrate specificity. SPT also interacts with ORMDL proteins, especially ORMDL3, which negatively regulate SPT activity in the presence of ceramides.

The protein resides in the endoplasmic reticulum membrane. The protein operates within lipid metabolism; sphingolipid metabolism. Its function is as follows. Component of the serine palmitoyltransferase multisubunit enzyme (SPT) that catalyzes the initial and rate-limiting step in sphingolipid biosynthesis by condensing L-serine and activated acyl-CoA (most commonly palmitoyl-CoA) to form long-chain bases. The SPT complex is composed of SPTLC1, SPTLC2 or SPTLC3 and SPTSSA or SPTSSB. Within this complex, the heterodimer consisting of SPTLC1 and SPTLC2/SPTLC3 forms the catalytic core. Within the SPT complex, SPTSSB stimulates the catalytic activity and plays a role in substrate specificity. SPT complexes with this subunit showing a preference for longer acyl-CoAs. The SPTLC1-SPTLC2-SPTSSB complex shows a strong preference for C18-CoA substrate, while the SPTLC1-SPTLC3-SPTSSB isozyme displays an ability to use a broader range of acyl-CoAs, without apparent preference. The polypeptide is Serine palmitoyltransferase small subunit B (sptssb) (Xenopus tropicalis (Western clawed frog)).